We begin with the raw amino-acid sequence, 263 residues long: 2-keto-4-pentenoate hydratase 1 (263 aa).

This sequence belongs to the hydratase/decarboxylase family. MhpD subfamily. A divalent metal cation is required as a cofactor.

It carries out the reaction (S)-4-hydroxy-2-oxopentanoate = (2Z)-2-hydroxypenta-2,4-dienoate + H2O. It functions in the pathway aromatic compound metabolism; 3-phenylpropanoate degradation. Catalyzes the conversion of 2-hydroxypentadienoic acid (enolic form of 2-oxopent-4-enoate) to 4-hydroxy-2-ketopentanoic acid. This is 2-keto-4-pentenoate hydratase 1 from Dechloromonas aromatica (strain RCB).